The following is an 843-amino-acid chain: Protein P (843 aa).

Residues 1–177 (MPLSYQHFRK…FCGSPYSWEQ (177 aa)) form a terminal protein domain (TP) region. The segment at 178 to 346 (DLQHGRLVIQ…YCLCHIVNLI (169 aa)) is spacer. 2 disordered regions span residues 219 to 258 (RKSRLGPQPTQGQLAGRPQGGSGSIRARVHPSPWGTVGVE) and 297 to 316 (SSGHAVELHHFPPNSSRSQS). The interval 347–690 (DDWGPCAEHG…YLNLYPVARQ (344 aa)) is polymerase/reverse transcriptase domain (RT). A Reverse transcriptase domain is found at 357–600 (EHRIRTPRTP…YSLNFMGYVI (244 aa)). Positions 429, 551, and 552 each coordinate Mg(2+).

This sequence belongs to the hepadnaviridae P protein family.

It catalyses the reaction DNA(n) + a 2'-deoxyribonucleoside 5'-triphosphate = DNA(n+1) + diphosphate. The enzyme catalyses Endonucleolytic cleavage to 5'-phosphomonoester.. Activated by host HSP70 and HSP40 in vitro to be able to bind the epsilon loop of the pgRNA. Because deletion of the RNase H region renders the protein partly chaperone-independent, the chaperones may be needed indirectly to relieve occlusion of the RNA-binding site by this domain. Inhibited by several reverse-transcriptase inhibitors: Lamivudine, Adefovir and Entecavir. Functionally, multifunctional enzyme that converts the viral RNA genome into dsDNA in viral cytoplasmic capsids. This enzyme displays a DNA polymerase activity that can copy either DNA or RNA templates, and a ribonuclease H (RNase H) activity that cleaves the RNA strand of RNA-DNA heteroduplexes in a partially processive 3'- to 5'-endonucleasic mode. Neo-synthesized pregenomic RNA (pgRNA) are encapsidated together with the P protein, and reverse-transcribed inside the nucleocapsid. Initiation of reverse-transcription occurs first by binding the epsilon loop on the pgRNA genome, and is initiated by protein priming, thereby the 5'-end of (-)DNA is covalently linked to P protein. Partial (+)DNA is synthesized from the (-)DNA template and generates the relaxed circular DNA (RC-DNA) genome. After budding and infection, the RC-DNA migrates in the nucleus, and is converted into a plasmid-like covalently closed circular DNA (cccDNA). The activity of P protein does not seem to be necessary for cccDNA generation, and is presumably released from (+)DNA by host nuclear DNA repair machinery. The protein is Protein P of Hepatitis B virus genotype B1 (isolate Japan/Ry30/2002) (HBV-B).